A 423-amino-acid chain; its full sequence is Transmembrane protein 130 (423 aa).

A signal peptide spans methionine 1–alanine 24. The Extracellular portion of the chain corresponds to glycine 25–proline 339. Asparagine 34, asparagine 197, and asparagine 300 each carry an N-linked (GlcNAc...) asparagine glycan. The PKD domain occupies tryptophan 147–serine 233. The chain crosses the membrane as a helical span at residues alanine 340–methionine 360. At threonine 361–valine 423 the chain is on the cytoplasmic side.

It localises to the golgi apparatus membrane. In Pongo abelii (Sumatran orangutan), this protein is Transmembrane protein 130 (TMEM130).